Reading from the N-terminus, the 566-residue chain is Proline--tRNA ligase (566 aa).

Belongs to the class-II aminoacyl-tRNA synthetase family. ProS type 1 subfamily. In terms of assembly, homodimer.

It is found in the cytoplasm. It carries out the reaction tRNA(Pro) + L-proline + ATP = L-prolyl-tRNA(Pro) + AMP + diphosphate. Catalyzes the attachment of proline to tRNA(Pro) in a two-step reaction: proline is first activated by ATP to form Pro-AMP and then transferred to the acceptor end of tRNA(Pro). As ProRS can inadvertently accommodate and process non-cognate amino acids such as alanine and cysteine, to avoid such errors it has two additional distinct editing activities against alanine. One activity is designated as 'pretransfer' editing and involves the tRNA(Pro)-independent hydrolysis of activated Ala-AMP. The other activity is designated 'posttransfer' editing and involves deacylation of mischarged Ala-tRNA(Pro). The misacylated Cys-tRNA(Pro) is not edited by ProRS. In Coxiella burnetii (strain RSA 493 / Nine Mile phase I), this protein is Proline--tRNA ligase.